Here is a 539-residue protein sequence, read N- to C-terminus: Prolyl 4-hydroxylase subunit alpha-2 (539 aa).

An N-terminal signal peptide occupies residues 1-16 (MRAVLLVCLLAGLAHA). The N-linked (GlcNAc...) asparagine glycan is linked to Asn110. The region spanning 401 to 509 (TSEELQVANY…KWVSNKWIHE (109 aa)) is the Fe2OG dioxygenase domain. Fe cation is bound by residues His419, Asp421, and His490. Lys500 is a binding site for 2-oxoglutarate.

The protein belongs to the P4HA family. Heterotetramer of two alpha chains and two beta chains. Exist either as a phy-2(2)/pdi-2(2) tetramer or as a phy-1/phy-2/pdi-2(2) tetramer. Requires Fe(2+) as cofactor. It depends on L-ascorbate as a cofactor.

It localises to the endoplasmic reticulum lumen. The catalysed reaction is L-prolyl-[collagen] + 2-oxoglutarate + O2 = trans-4-hydroxy-L-prolyl-[collagen] + succinate + CO2. Catalyzes the post-translational formation of 4-hydroxyproline in -Xaa-Pro-Gly- sequences in collagens and other proteins. The sequence is that of Prolyl 4-hydroxylase subunit alpha-2 (phy-2) from Caenorhabditis elegans.